The sequence spans 400 residues: Probable tRNA pseudouridine synthase D (400 aa).

The active-site Nucleophile is the aspartate 89. A TRUD domain is found at 162–357; it reads GVPNYYGLQR…AGGDRKPALL (196 aa).

The protein belongs to the pseudouridine synthase TruD family.

The enzyme catalyses uridine(13) in tRNA = pseudouridine(13) in tRNA. Could be responsible for synthesis of pseudouridine from uracil-13 in transfer RNAs. The polypeptide is Probable tRNA pseudouridine synthase D (Methanopyrus kandleri (strain AV19 / DSM 6324 / JCM 9639 / NBRC 100938)).